A 403-amino-acid polypeptide reads, in one-letter code: Coenzyme A biosynthesis bifunctional protein CoaBC (403 aa).

The interval 1–197 is phosphopantothenoylcysteine decarboxylase; the sequence is MLHHVKLIYA…LHPKSLEGKR (197 aa). Residues 198 to 403 are phosphopantothenate--cysteine ligase; the sequence is VLVTAGATRE…RLWDEIEKML (206 aa). Aspartate 287, lysine 297, and phenylalanine 330 together coordinate CTP.

The protein in the N-terminal section; belongs to the HFCD (homo-oligomeric flavin containing Cys decarboxylase) superfamily. It in the C-terminal section; belongs to the PPC synthetase family. It depends on Mg(2+) as a cofactor. FMN serves as cofactor.

The enzyme catalyses N-[(R)-4-phosphopantothenoyl]-L-cysteine + H(+) = (R)-4'-phosphopantetheine + CO2. It carries out the reaction (R)-4'-phosphopantothenate + L-cysteine + CTP = N-[(R)-4-phosphopantothenoyl]-L-cysteine + CMP + diphosphate + H(+). The protein operates within cofactor biosynthesis; coenzyme A biosynthesis. In terms of biological role, catalyzes two sequential steps in the biosynthesis of coenzyme A. In the first step cysteine is conjugated to 4'-phosphopantothenate to form 4-phosphopantothenoylcysteine. In the second step the latter compound is decarboxylated to form 4'-phosphopantotheine. The polypeptide is Coenzyme A biosynthesis bifunctional protein CoaBC (Thermococcus kodakarensis (strain ATCC BAA-918 / JCM 12380 / KOD1) (Pyrococcus kodakaraensis (strain KOD1))).